Reading from the N-terminus, the 264-residue chain is Signal peptidase I (264 aa).

The Cytoplasmic segment spans residues 1 to 18; that stretch reads MNRDNINSNKTVKQEFGS. The helical transmembrane segment at 19-39 threads the bilayer; it reads FAFVICIALVIRILIMEPFTV. Residues 40-264 are Extracellular-facing; the sequence is PTGSMKATIL…IFKNLYNVDE (225 aa). Residues serine 43 and lysine 106 contribute to the active site.

The protein belongs to the peptidase S26 family.

The protein resides in the cell membrane. The enzyme catalyses Cleavage of hydrophobic, N-terminal signal or leader sequences from secreted and periplasmic proteins.. This chain is Signal peptidase I (lepB), found in Rickettsia prowazekii (strain Madrid E).